The primary structure comprises 530 residues: Copine-D (530 aa).

C2 domains are found at residues 1–122 (MNPI…RMKM) and 130–248 (LSGS…EFEI). Residues aspartate 25, aspartate 31, aspartate 85, aspartate 87, and aspartate 100 each coordinate Ca(2+). Residues 289 to 507 (NLMVAIDCTA…ALAHETLKEI (219 aa)) enclose the VWFA domain.

It belongs to the copine family. The cofactor is Ca(2+).

In Dictyostelium discoideum (Social amoeba), this protein is Copine-D (cpnD).